The primary structure comprises 54 residues: Rubredoxin (54 aa).

In terms of domain architecture, Rubredoxin-like spans 1–54; it reads MKKYQCIVCGWIYDEAEGWPQDGIAPGTKWEDIPDDWTCPDCGVSKVDFEMIEV. Fe cation contacts are provided by Cys6, Cys9, Cys39, and Cys42.

This sequence belongs to the rubredoxin family. It depends on Fe(3+) as a cofactor.

Its subcellular location is the cytoplasm. It participates in hydrocarbon metabolism; alkane degradation. Its function is as follows. Involved in the hydrocarbon hydroxylating system, which transfers electrons from NADH to rubredoxin reductase and then through rubredoxin to alkane 1 monooxygenase. This chain is Rubredoxin (rubA), found in Acinetobacter baylyi (strain ATCC 33305 / BD413 / ADP1).